The sequence spans 204 residues: MGAYRYMQELWRKKQSDVMRFLLRVRCWQYRQLSNLHRAPRPTRPDKARRLGYKAKQGYVIYRVRVRRGGRKRPVPKGATYGKPVHHGVNQIKFARSLQSVAEERAGRHCGALRVLNSYWVGEDSTYKFFEVILIDPFHKAIRRNPDTQWITKAVHKHREMRGLTSAGKKSRGLGKGHKFHLTIGGSRRAAWKRRNTLQLHRYR.

The protein belongs to the eukaryotic ribosomal protein eL15 family. In terms of assembly, component of the large ribosomal subunit.

It localises to the cytoplasm. Functionally, component of the large ribosomal subunit. The ribosome is a large ribonucleoprotein complex responsible for the synthesis of proteins in the cell. In Monopterus albus (Swamp eel), this protein is Large ribosomal subunit protein eL15 (rpl15).